A 365-amino-acid polypeptide reads, in one-letter code: Deoxyguanosinetriphosphate triphosphohydrolase-like protein (365 aa).

Residues 52–187 (RLTHSIEVSQ…VDHADEIAYV (136 aa)) form the HD domain.

It belongs to the dGTPase family. Type 2 subfamily.

The protein is Deoxyguanosinetriphosphate triphosphohydrolase-like protein of Wolinella succinogenes (strain ATCC 29543 / DSM 1740 / CCUG 13145 / JCM 31913 / LMG 7466 / NCTC 11488 / FDC 602W) (Vibrio succinogenes).